Reading from the N-terminus, the 662-residue chain is MPPMQARTLSVYNVMVPLVCLLLFFSTPTHGLSDSEAILKFKESLVVGQENALASWNAKSPPCTWSGVLCNGGSVWRLQMENLELSGSIDIEALSGLTSLRTLSFMNNKFEGPFPDFKKLAALKSLYLSNNQFGGDIPGDAFEGMGWLKKVHLAQNKFTGQIPSSVAKLPKLLELRLDGNQFTGEIPEFEHQLHLLNLSNNALTGPIPESLSMTDPKVFEGNKGLYGKPLETECDSPYIEHPPQSEARPKSSSRGPLVITAIVAALTILIILGVIFLLNRSYKNKKPRLAVETGPSSLQKKTGIREADQSRRDRKKADHRKGSGTTKRMGAAAGVENTKLSFLREDREKFDLQDLLKASAEILGSGCFGASYKAVLSSGQMMVVKRFKQMNNAGRDEFQEHMKRLGRLMHHNLLSIVAYYYRKEEKLLVCDFAERGSLAINLHSNQSLGKPSLDWPTRLKIVKGVAKGLFYLHQDLPSLMAPHGHLKSSNVLLTKTFEPLLTDYGLIPLINQEKAQMHMAAYRSPEYLQHRRITKKTDVWGLGILILEILTGKFPANFSQSSEEDLASWVNSGFHGVWAPSLFDKGMGKTSHCEGQILKLLTIGLNCCEPDVEKRLDIGQAVEKIEELKEREGDDDDFYSTYVSETDGRSSKGESCESISFA.

Positions 1–31 are cleaved as a signal peptide; that stretch reads MPPMQARTLSVYNVMVPLVCLLLFFSTPTHG. Residues 32–256 are Extracellular-facing; it reads LSDSEAILKF…ARPKSSSRGP (225 aa). 6 LRR repeats span residues 79-98, 99-121, 122-144, 147-169, 171-191, and 192-214; these read QMENLELSGSIDIEALSGLT, SLRTLSFMNNKFEGPFPDFKKLA, ALKSLYLSNNQFGGDIPGDAFEG, WLKKVHLAQNKFTGQIPSSVAKL, KLLELRLDGNQFTGEIPEFEH, and QLHLLNLSNNALTGPIPESLSMT. N197 carries N-linked (GlcNAc...) asparagine glycosylation. The disordered stretch occupies residues 233-253; it reads ECDSPYIEHPPQSEARPKSSS. The helical transmembrane segment at 257–277 threads the bilayer; that stretch reads LVITAIVAALTILIILGVIFL. Residues 278–662 are Cytoplasmic-facing; it reads LNRSYKNKKP…GESCESISFA (385 aa). The disordered stretch occupies residues 288-330; that stretch reads RLAVETGPSSLQKKTGIREADQSRRDRKKADHRKGSGTTKRMG. The Protein kinase domain occupies 357 to 639; that stretch reads KASAEILGSG…EREGDDDDFY (283 aa). S359 bears the Phosphoserine mark. Residues 363–371 and K385 contribute to the ATP site; that span reads LGSGCFGAS. At S437 the chain carries Phosphoserine. Residue T457 is modified to Phosphothreonine. Position 527 is a phosphotyrosine (Y527). The interval 636-662 is disordered; sequence DDFYSTYVSETDGRSSKGESCESISFA. Residues 646-655 are compositionally biased toward basic and acidic residues; that stretch reads TDGRSSKGES.

Belongs to the protein kinase superfamily. Ser/Thr protein kinase family. Interacts in vitro with ROPGEF1 (via PRONE domain). In terms of tissue distribution, expressed in pollen and/or in flowers, but not in leaves.

Its subcellular location is the cell membrane. It catalyses the reaction L-seryl-[protein] + ATP = O-phospho-L-seryl-[protein] + ADP + H(+). The catalysed reaction is L-threonyl-[protein] + ATP = O-phospho-L-threonyl-[protein] + ADP + H(+). Its function is as follows. Receptor-like kinase involved in the control of pollen germination and pollen tube polar growth. The polypeptide is Pollen receptor-like kinase 1 (Arabidopsis thaliana (Mouse-ear cress)).